The primary structure comprises 425 residues: Serine--tRNA ligase (425 aa).

An L-serine-binding site is contributed by 230–232 (TAE). 261-263 (RAE) lines the ATP pocket. Glutamate 284 is an L-serine binding site. Residue 348 to 351 (EISS) participates in ATP binding. Residue serine 384 participates in L-serine binding.

Belongs to the class-II aminoacyl-tRNA synthetase family. Type-1 seryl-tRNA synthetase subfamily. As to quaternary structure, homodimer. The tRNA molecule binds across the dimer.

The protein localises to the cytoplasm. It catalyses the reaction tRNA(Ser) + L-serine + ATP = L-seryl-tRNA(Ser) + AMP + diphosphate + H(+). The catalysed reaction is tRNA(Sec) + L-serine + ATP = L-seryl-tRNA(Sec) + AMP + diphosphate + H(+). The protein operates within aminoacyl-tRNA biosynthesis; selenocysteinyl-tRNA(Sec) biosynthesis; L-seryl-tRNA(Sec) from L-serine and tRNA(Sec): step 1/1. Functionally, catalyzes the attachment of serine to tRNA(Ser). Is also able to aminoacylate tRNA(Sec) with serine, to form the misacylated tRNA L-seryl-tRNA(Sec), which will be further converted into selenocysteinyl-tRNA(Sec). This chain is Serine--tRNA ligase, found in Zymomonas mobilis subsp. mobilis (strain ATCC 31821 / ZM4 / CP4).